We begin with the raw amino-acid sequence, 655 residues long: Alpha-L-iduronidase (655 aa).

The signal sequence occupies residues 1–25 (MRPPGPRAPGLALLAALLAAPRALA). Positions 53, 55, and 57 each coordinate alpha-D-mannopyranose. His-90 lines the alpha-L-iduronate pocket. N-linked (GlcNAc...) asparagine glycosylation is present at Asn-109. Residues Asn-180 and Glu-181 each contribute to the alpha-L-iduronate site. Glu-181 serves as the catalytic Proton donor. N-linked (GlcNAc...) asparagine glycosylation is found at Asn-189 and Asn-242. Alpha-L-iduronate contacts are provided by Lys-263, Glu-298, and Gly-304. Glu-298 (nucleophile) is an active-site residue. Trp-305 lines the alpha-D-mannopyranose pocket. An N-linked (GlcNAc...) asparagine glycan is attached at Asn-335. 2 residues coordinate alpha-L-iduronate: Asp-348 and Arg-362. 2 N-linked (GlcNAc...) asparagine glycosylation sites follow: Asn-371 and Asn-414. Cys-540 and Cys-576 are joined by a disulfide.

The protein belongs to the glycosyl hydrolase 39 family. Monomer. In terms of processing, a smaller 63 kDa protein probably arises from IDUA protein by proteolytic cleavage. N-glycosylation contributes to substrate binding and is required for full enzymatic activity. In terms of tissue distribution, detected in testis (at protein level). Expressed ubiquitously.

Its subcellular location is the lysosome. It catalyses the reaction Hydrolysis of unsulfated alpha-L-iduronosidic linkages in dermatan sulfate.. This chain is Alpha-L-iduronidase (IDUA), found in Canis lupus familiaris (Dog).